We begin with the raw amino-acid sequence, 299 residues long: Taste receptor type 2 member 50 (299 aa).

Position 1 (M1) is a topological domain, extracellular. The chain crosses the membrane as a helical span at residues 2–22; the sequence is ITFLYIFFSILIMVLFVLGNF. Residues 23–55 are Cytoplasmic-facing; it reads ANGFIALVNFIDWVKRKKISSADQILTALAVSR. The chain crosses the membrane as a helical span at residues 56–76; that stretch reads IGLLWTLLLNWYLTVLNPAFY. The Extracellular portion of the chain corresponds to 77–87; that stretch reads SVELRITSYNA. Residues 88–108 traverse the membrane as a helical segment; it reads WVVTNHFSMWLAASLSIFYLL. Residues 109 to 126 lie on the Cytoplasmic side of the membrane; the sequence is KIANFSNLIFLHLKRRVR. The helical transmembrane segment at 127-147 threads the bilayer; sequence SVILVILLGTLIFLVCHLLVA. The Extracellular portion of the chain corresponds to 148 to 181; sequence NMDESMWAEEYEGNITGKMKLRNTVHLSYLTVTT. N161 carries N-linked (GlcNAc...) asparagine glycosylation. The chain crosses the membrane as a helical span at residues 182 to 202; the sequence is LWSFIPFTLSLISFLMLICSL. Over 203-229 the chain is Cytoplasmic; that stretch reads CKHLKKMQLHGEGSQDLSTKVHIKALQ. A helical transmembrane segment spans residues 230 to 250; the sequence is TLISFLLLCAIFFLFLIISVW. The Extracellular portion of the chain corresponds to 251 to 259; the sequence is SPRRLRNDP. A helical transmembrane segment spans residues 260–280; it reads VVMVSKAVGNIYLAFDSFILI. Topologically, residues 281-299 are cytoplasmic; sequence WRTKKLKHTFLLILCQIRC.

The protein belongs to the G-protein coupled receptor T2R family.

Its subcellular location is the membrane. Receptor that may play a role in the perception of bitterness and is gustducin-linked. May play a role in sensing the chemical composition of the gastrointestinal content. The activity of this receptor may stimulate alpha gustducin, mediate PLC-beta-2 activation and lead to the gating of TRPM5. In Pan paniscus (Pygmy chimpanzee), this protein is Taste receptor type 2 member 50 (TAS2R50).